We begin with the raw amino-acid sequence, 85 residues long: Small ribosomal subunit protein uS12m (85 aa).

It belongs to the universal ribosomal protein uS12 family.

It localises to the mitochondrion matrix. The protein localises to the kinetoplast. Its function is as follows. Protein S12 is involved in the translation initiation step. The polypeptide is Small ribosomal subunit protein uS12m (RPS12) (Leishmania tarentolae (Sauroleishmania tarentolae)).